A 108-amino-acid chain; its full sequence is Biogenesis of lysosome-related organelles complex 1 subunit CNL1 (108 aa).

The protein belongs to the BLOC1S4 family. Component of the biogenesis of lysosome-related organelles complex-1 (BLOC-1).

The protein resides in the cytoplasm. Component of the biogenesis of lysosome-related organelles complex-1 (BLOC-1), a complex that is involved in endosomal cargo sorting. In Zygosaccharomyces rouxii (strain ATCC 2623 / CBS 732 / NBRC 1130 / NCYC 568 / NRRL Y-229), this protein is Biogenesis of lysosome-related organelles complex 1 subunit CNL1 (CLN1).